Reading from the N-terminus, the 349-residue chain is UDP-N-acetylenolpyruvoylglucosamine reductase (349 aa).

Residues 24 to 197 form the FAD-binding PCMH-type domain; the sequence is FGIDATARFA…VAVTFRLPKR (174 aa). Residue arginine 173 is part of the active site. Serine 249 (proton donor) is an active-site residue. Glutamate 345 is a catalytic residue.

Belongs to the MurB family. FAD serves as cofactor.

Its subcellular location is the cytoplasm. It catalyses the reaction UDP-N-acetyl-alpha-D-muramate + NADP(+) = UDP-N-acetyl-3-O-(1-carboxyvinyl)-alpha-D-glucosamine + NADPH + H(+). It functions in the pathway cell wall biogenesis; peptidoglycan biosynthesis. In terms of biological role, cell wall formation. In Burkholderia ambifaria (strain MC40-6), this protein is UDP-N-acetylenolpyruvoylglucosamine reductase.